Reading from the N-terminus, the 345-residue chain is N-acetyl-gamma-glutamyl-phosphate reductase (345 aa).

Residue cysteine 149 is part of the active site.

This sequence belongs to the NAGSA dehydrogenase family. Type 1 subfamily.

Its subcellular location is the cytoplasm. The enzyme catalyses N-acetyl-L-glutamate 5-semialdehyde + phosphate + NADP(+) = N-acetyl-L-glutamyl 5-phosphate + NADPH + H(+). Its pathway is amino-acid biosynthesis; L-arginine biosynthesis; N(2)-acetyl-L-ornithine from L-glutamate: step 3/4. In terms of biological role, catalyzes the NADPH-dependent reduction of N-acetyl-5-glutamyl phosphate to yield N-acetyl-L-glutamate 5-semialdehyde. This Bacillus anthracis protein is N-acetyl-gamma-glutamyl-phosphate reductase.